A 132-amino-acid chain; its full sequence is Transcription antitermination protein NusB (132 aa).

The protein belongs to the NusB family.

Its function is as follows. Involved in transcription antitermination. Required for transcription of ribosomal RNA (rRNA) genes. Binds specifically to the boxA antiterminator sequence of the ribosomal RNA (rrn) operons. The sequence is that of Transcription antitermination protein NusB from Campylobacter jejuni subsp. jejuni serotype O:2 (strain ATCC 700819 / NCTC 11168).